The chain runs to 220 residues: Ribose-5-phosphate isomerase A (220 aa).

Substrate contacts are provided by residues 28–31 (TGST), 81–84 (DGAD), and 94–97 (KGGG). Glu-103 serves as the catalytic Proton acceptor. Lys-121 is a substrate binding site.

This sequence belongs to the ribose 5-phosphate isomerase family. In terms of assembly, homodimer.

The catalysed reaction is aldehydo-D-ribose 5-phosphate = D-ribulose 5-phosphate. It participates in carbohydrate degradation; pentose phosphate pathway; D-ribose 5-phosphate from D-ribulose 5-phosphate (non-oxidative stage): step 1/1. Its function is as follows. Catalyzes the reversible conversion of ribose-5-phosphate to ribulose 5-phosphate. The polypeptide is Ribose-5-phosphate isomerase A (Shewanella putrefaciens (strain CN-32 / ATCC BAA-453)).